Reading from the N-terminus, the 115-residue chain is UPF0597 protein NTHI1023 (115 aa).

This sequence belongs to the UPF0597 family.

The chain is UPF0597 protein NTHI1023 from Haemophilus influenzae (strain 86-028NP).